Reading from the N-terminus, the 196-residue chain is [1-hydroxy-2-(trimethylamino)ethyl]phosphonate dioxygenase (glycine-betaine-forming) (196 aa).

Y30 serves as a coordination point for [(1R)-1-hydroxy-2-(trimethylamino)ethyl]phosphonate. Fe cation contacts are provided by Y30, H40, H64, and D65. An HD domain is found at 37–156 (MAEHMLQGAT…VAEFEKNPNL (120 aa)). The [(1R)-1-hydroxy-2-(trimethylamino)ethyl]phosphonate site is built by H68, H86, H109, K113, S131, S134, and R163. Fe cation contacts are provided by H86 and H109. D166 is a binding site for Fe cation.

Fe cation serves as cofactor.

It catalyses the reaction [(1R)-1-hydroxy-2-(trimethylamino)ethyl]phosphonate + O2 = glycine betaine + phosphate + 2 H(+). Functionally, involved in the degradation of the naturally occurring organophosphonate 2-(trimethylammonio)ethylphosphonate (TMAEP). Catalyzes the O(2)-dependent cleavage of (R)-1-hydroxy-2-(trimethylammonio)ethylphosphonate (OH-TMAEP) to yield glycine betaine and phosphate. Is highly specific for its N-trimethylated substrate. This chain is [1-hydroxy-2-(trimethylamino)ethyl]phosphonate dioxygenase (glycine-betaine-forming), found in Leisingera caerulea (Phaeobacter caeruleus).